Here is a 331-residue protein sequence, read N- to C-terminus: Biotin synthase (331 aa).

Residues 52–277 (PDVEVEGIIS…RTMLRFAGGR (226 aa)) enclose the Radical SAM core domain. 3 residues coordinate [4Fe-4S] cluster: cysteine 67, cysteine 71, and cysteine 74. [2Fe-2S] cluster-binding residues include cysteine 110, cysteine 143, cysteine 202, and arginine 272.

Belongs to the radical SAM superfamily. Biotin synthase family. Homodimer. It depends on [4Fe-4S] cluster as a cofactor. [2Fe-2S] cluster is required as a cofactor.

The enzyme catalyses (4R,5S)-dethiobiotin + (sulfur carrier)-SH + 2 reduced [2Fe-2S]-[ferredoxin] + 2 S-adenosyl-L-methionine = (sulfur carrier)-H + biotin + 2 5'-deoxyadenosine + 2 L-methionine + 2 oxidized [2Fe-2S]-[ferredoxin]. Its pathway is cofactor biosynthesis; biotin biosynthesis; biotin from 7,8-diaminononanoate: step 2/2. Catalyzes the conversion of dethiobiotin (DTB) to biotin by the insertion of a sulfur atom into dethiobiotin via a radical-based mechanism. The sequence is that of Biotin synthase from Mycobacterium sp. (strain JLS).